Here is a 236-residue protein sequence, read N- to C-terminus: Thiamine-phosphate synthase (236 aa).

Residues 57 to 61 (QLRDK) and N89 contribute to the 4-amino-2-methyl-5-(diphosphooxymethyl)pyrimidine site. 2 residues coordinate Mg(2+): D90 and D109. Residue S128 participates in 4-amino-2-methyl-5-(diphosphooxymethyl)pyrimidine binding. 154–156 (TPS) is a 2-[(2R,5Z)-2-carboxy-4-methylthiazol-5(2H)-ylidene]ethyl phosphate binding site. K157 is a 4-amino-2-methyl-5-(diphosphooxymethyl)pyrimidine binding site. Residues G185 and 205-206 (IS) contribute to the 2-[(2R,5Z)-2-carboxy-4-methylthiazol-5(2H)-ylidene]ethyl phosphate site.

This sequence belongs to the thiamine-phosphate synthase family. Requires Mg(2+) as cofactor.

The enzyme catalyses 2-[(2R,5Z)-2-carboxy-4-methylthiazol-5(2H)-ylidene]ethyl phosphate + 4-amino-2-methyl-5-(diphosphooxymethyl)pyrimidine + 2 H(+) = thiamine phosphate + CO2 + diphosphate. It carries out the reaction 2-(2-carboxy-4-methylthiazol-5-yl)ethyl phosphate + 4-amino-2-methyl-5-(diphosphooxymethyl)pyrimidine + 2 H(+) = thiamine phosphate + CO2 + diphosphate. It catalyses the reaction 4-methyl-5-(2-phosphooxyethyl)-thiazole + 4-amino-2-methyl-5-(diphosphooxymethyl)pyrimidine + H(+) = thiamine phosphate + diphosphate. The protein operates within cofactor biosynthesis; thiamine diphosphate biosynthesis; thiamine phosphate from 4-amino-2-methyl-5-diphosphomethylpyrimidine and 4-methyl-5-(2-phosphoethyl)-thiazole: step 1/1. In terms of biological role, condenses 4-methyl-5-(beta-hydroxyethyl)thiazole monophosphate (THZ-P) and 2-methyl-4-amino-5-hydroxymethyl pyrimidine pyrophosphate (HMP-PP) to form thiamine monophosphate (TMP). This chain is Thiamine-phosphate synthase, found in Roseiflexus sp. (strain RS-1).